The sequence spans 425 residues: Glutamyl-tRNA reductase (425 aa).

Residues 49-52 (TCNR), S109, 114-116 (EGQ), and Q120 contribute to the substrate site. C50 (nucleophile) is an active-site residue. Position 189–194 (189–194 (GAGETG)) interacts with NADP(+).

The protein belongs to the glutamyl-tRNA reductase family. Homodimer.

It catalyses the reaction (S)-4-amino-5-oxopentanoate + tRNA(Glu) + NADP(+) = L-glutamyl-tRNA(Glu) + NADPH + H(+). It participates in porphyrin-containing compound metabolism; protoporphyrin-IX biosynthesis; 5-aminolevulinate from L-glutamyl-tRNA(Glu): step 1/2. Its pathway is porphyrin-containing compound metabolism; chlorophyll biosynthesis. Catalyzes the NADPH-dependent reduction of glutamyl-tRNA(Glu) to glutamate 1-semialdehyde (GSA). The polypeptide is Glutamyl-tRNA reductase (Pelodictyon phaeoclathratiforme (strain DSM 5477 / BU-1)).